We begin with the raw amino-acid sequence, 331 residues long: Peroxisomal nicotinamide adenine dinucleotide carrier (331 aa).

3 Solcar repeats span residues 2-91, 109-216, and 229-320; these read SDAL…FRNR, VGMF…MLTK, and VTAL…LVKG. The next 6 helical transmembrane spans lie at 5 to 25, 63 to 85, 116 to 136, 180 to 200, 235 to 255, and 293 to 313; these read LINGLAGAGGGIIAQLLTYPL, LYGGLAPSLAGTAASQGVYYYFY, LVAAFAGSVNVLMTNPIWVIV, VYDEAGITGFWKGVIPTLIMV, FLLGAVAKLGATVTTYPLLVV, and YKGMSTKIVQSVLAAAVLFMI.

The protein belongs to the mitochondrial carrier (TC 2.A.29) family. Homodimer. As to expression, expressed in cotyledons, hypocotyls, vascular tissues, trichomes, hydathodes, seeds, pedicels, flowers and stigma.

It localises to the glyoxysome membrane. Its activity is regulated as follows. Inhibited by pyridoxal 5'-phosphate, bathophenanthroline, tannic acid, mersalyl, mercuric chloride and bromocresol purple. Its function is as follows. Mediates the NAD(+) import into peroxisomes. Favors the NAD(+)(in)/AMP(out) antiport exchange, but is also able to catalyze a low unidirectional transport that might be essential under special conditions. Transports CoA, dephospho-CoA, acetyl-CoA, adenosine 3',5'-diphosphate (PAP), NAD(+), AMP, ADP and NADH, but has no activity with ATP, GTP, GDP, NADPH, NADP(+) or FAD. Required for peroxisomes proliferation. The polypeptide is Peroxisomal nicotinamide adenine dinucleotide carrier (PXN) (Arabidopsis thaliana (Mouse-ear cress)).